A 1265-amino-acid polypeptide reads, in one-letter code: MKVRLLRQLSAAAKVKAPSGLQGPPQAHQFISLLLEEYGALCQAARSISTFLGTLENEHLKKFQVTWELHNKHLFENLVFSEPLLQSNLPALVSQIRLGTTTHDTCSEDTYSTLLQRYQRSEEELRRVAEEWLECQKRIDAYVDEQMTMKTKQRMLTEDWELFKQRRFIEEQLTNKKAVTGENNFTDTMRHMLSSRLSMPDCPNCNYRRRCACDDCSLSHILTCGIMDPPVTDDIHIHQLPLQVDPAPDYLAERSPPSVSSASSGSGSSSPITIQQHPRLILTDSGSAPTFCSDDEDVAPLSAKFADIYPLSNYDDTEVVANMNGIHSELNGGGENMALKDESPQISSTSSSSSEADDEEADGESSGEPPGAPKEDGVLGSRSPRTEESKADSPPPSYPTQQAEQAPNTCECHVCKQEASGLTPSAMTAGALPPGHQFLSPEKPTHPALHLYPHIHGHVPLHTVPHLPRPLIHPTLYATPPFTHSKALPPAPVQNHTNKHQVFNASLQDHIYPSCFGNTPEWNSSKFISLWGSEVMNDKNWNPGTFLPDTISGSEILGPTLSETRPEALPPPSSNETPAVSDSKEKKNAAKKKCLYNFQDAFMEANKVVMATSSATSSVSCTATTVQSSNSQFRVSSKRPPSVGDVFHGISKEDHRHSAPAAPRNSPTGLAPLPALSPAALSPAALSPASTPHLANLAAPSFPKTATTTPGFVDTRKSFCPAPLPPATDGSISAPPSVCSDPDCEGHRCENGVYDPQQDDGDESADEDSCSEHSSSTSTSTNQKEGKYCDCCYCEFFGHGGPPAAPTSRNYAEMREKLRLRLTKRKEEQPKKMDQISERESVVDHRRVEDLLQFINSSETKPVSSTRAAKRARHKQRKLEEKARLEAEARAREHLHLQEEQRRREEEEDEEEEEDRFKEEFQRLQELQKLRAVKKKKKERPSKDCPKLDMLTRNFQAATESVPNSGNIHNGSLEQTEEPETSSHSPSRHMNHSEPRPGLGADGDAADPVDTRDSKFLLPKEVNGKQHEPLSFFFDIMQHHKEGNGKQKLRQTSKASSEPARRPTEPPKATEGQSKPRAQTESKAKVVDLMSITEQKREERKVNSNNNNKKQLNHIKDEKSNPTPMEPTSPGEHQQNSKLVLAESPQPKGKNKKNKKKKGDRVNNSIDGVSLLLPSLGYNGAILAHCNLRLPGSSDCAASASQVVGITDDVFLPKDIDLDSVDMDETEREVEYFKRFCLDSARQTRQRLSINWSNFSLKKATFAAH.

A coiled-coil region spans residues 107–142; sequence SEDTYSTLLQRYQRSEEELRRVAEEWLECQKRIDAY. The interval 247 to 272 is disordered; the sequence is APDYLAERSPPSVSSASSGSGSSSPI. A compositionally biased stretch (low complexity) spans 255-271; that stretch reads SPPSVSSASSGSGSSSP. The residue at position 293 (Ser-293) is a Phosphoserine. Disordered stretches follow at residues 331–407, 553–586, 626–674, 750–785, 822–841, 859–881, and 893–1163; these read NGGG…EQAP, GSEI…SKEK, VQSS…APLP, ENGV…NQKE, LTKR…ERES, ETKP…KLEE, and EHLH…DRVN. Residues 355-365 are compositionally biased toward acidic residues; the sequence is EADDEEADGES. Residue Ser-383 is modified to Phosphoserine. Ser-642 is subject to Phosphoserine. Residues 757-769 are compositionally biased toward acidic residues; it reads QQDDGDESADEDS. Positions 772 to 781 are enriched in low complexity; that stretch reads EHSSSTSTST. Residues 868 to 877 show a composition bias toward basic residues; it reads AAKRARHKQR. Residues 873 to 932 adopt a coiled-coil conformation; the sequence is RHKQRKLEEKARLEAEARAREHLHLQEEQRRREEEEDEEEEEDRFKEEFQRLQELQKLRA. Composition is skewed to basic and acidic residues over residues 893–905 and 915–929; these read EHLH…RRRE and DRFK…ELQK. Positions 931-940 are enriched in basic residues; the sequence is RAVKKKKKER. The segment covering 953-973 has biased composition (polar residues); sequence RNFQAATESVPNSGNIHNGSL. Positions 1093-1118 form a coiled coil; it reads TEQKREERKVNSNNNNKKQLNHIKDE. Residues Ser-1129 and Ser-1144 each carry the phosphoserine modification. A compositionally biased stretch (basic residues) spans 1149 to 1159; the sequence is GKNKKNKKKKG.

This sequence belongs to the FAM193 family.

The chain is Protein FAM193A (FAM193A) from Homo sapiens (Human).